The following is a 96-amino-acid chain: Small ribosomal subunit protein bS16 (96 aa).

This sequence belongs to the bacterial ribosomal protein bS16 family.

The protein is Small ribosomal subunit protein bS16 of Anaplasma phagocytophilum (strain HZ).